Here is a 213-residue protein sequence, read N- to C-terminus: Probable nicotinate-nucleotide adenylyltransferase (213 aa).

The protein belongs to the NadD family.

It carries out the reaction nicotinate beta-D-ribonucleotide + ATP + H(+) = deamido-NAD(+) + diphosphate. It participates in cofactor biosynthesis; NAD(+) biosynthesis; deamido-NAD(+) from nicotinate D-ribonucleotide: step 1/1. Catalyzes the reversible adenylation of nicotinate mononucleotide (NaMN) to nicotinic acid adenine dinucleotide (NaAD). This is Probable nicotinate-nucleotide adenylyltransferase from Shigella boydii serotype 4 (strain Sb227).